The primary structure comprises 230 residues: Heptaprenylglyceryl phosphate synthase (230 aa).

K12 provides a ligand contact to sn-glycerol 1-phosphate. Positions 14 and 40 each coordinate Mg(2+). Residues 159 to 164, G189, and 209 to 210 contribute to the sn-glycerol 1-phosphate site; these read YIEYSG and GD.

The protein belongs to the GGGP/HepGP synthase family. Group I subfamily. Homodimer. Mg(2+) serves as cofactor.

It catalyses the reaction sn-glycerol 1-phosphate + all-trans-heptaprenyl diphosphate = 3-heptaprenyl-sn-glycero-1-phosphate + diphosphate. It functions in the pathway membrane lipid metabolism; glycerophospholipid metabolism. Functionally, prenyltransferase that catalyzes in vivo the transfer of the heptaprenyl moiety of heptaprenyl pyrophosphate (HepPP; 35 carbon atoms) to the C3 hydroxyl of sn-glycerol-1-phosphate (G1P), producing heptaprenylglyceryl phosphate (HepGP). This reaction is an ether-bond-formation step in the biosynthesis of archaea-type G1P-based membrane lipids found in Bacillales. This Staphylococcus aureus (strain MRSA252) protein is Heptaprenylglyceryl phosphate synthase.